The primary structure comprises 217 residues: Small ribosomal subunit protein uS3 (217 aa).

Residues 38–106 form the KH type-2 domain; that stretch reads IRKFIDNELK…KVHINVIEIK (69 aa).

This sequence belongs to the universal ribosomal protein uS3 family. As to quaternary structure, part of the 30S ribosomal subunit. Forms a tight complex with proteins S10 and S14.

Binds the lower part of the 30S subunit head. Binds mRNA in the 70S ribosome, positioning it for translation. In Staphylococcus epidermidis (strain ATCC 35984 / DSM 28319 / BCRC 17069 / CCUG 31568 / BM 3577 / RP62A), this protein is Small ribosomal subunit protein uS3.